Here is a 225-residue protein sequence, read N- to C-terminus: Methylthioribulose-1-phosphate dehydratase (225 aa).

Residues H106 and H108 each contribute to the Zn(2+) site.

Belongs to the aldolase class II family. MtnB subfamily. It depends on Zn(2+) as a cofactor.

The catalysed reaction is 5-(methylsulfanyl)-D-ribulose 1-phosphate = 5-methylsulfanyl-2,3-dioxopentyl phosphate + H2O. It functions in the pathway amino-acid biosynthesis; L-methionine biosynthesis via salvage pathway; L-methionine from S-methyl-5-thio-alpha-D-ribose 1-phosphate: step 2/6. Functionally, catalyzes the dehydration of methylthioribulose-1-phosphate (MTRu-1-P) into 2,3-diketo-5-methylthiopentyl-1-phosphate (DK-MTP-1-P). The protein is Methylthioribulose-1-phosphate dehydratase of Xanthomonas oryzae pv. oryzae (strain KACC10331 / KXO85).